The sequence spans 136 residues: Large ribosomal subunit protein bL19 (136 aa).

Belongs to the bacterial ribosomal protein bL19 family.

In terms of biological role, this protein is located at the 30S-50S ribosomal subunit interface and may play a role in the structure and function of the aminoacyl-tRNA binding site. This Xylella fastidiosa (strain 9a5c) protein is Large ribosomal subunit protein bL19.